Here is a 205-residue protein sequence, read N- to C-terminus: RNA pyrophosphohydrolase (205 aa).

Positions 6 to 149 (GFRPNVGIVL…KRGVYARALR (144 aa)) constitute a Nudix hydrolase domain. The Nudix box motif lies at 38 to 59 (GGMNTDETPVEAMYRELREETG). Positions 177–205 (PGSSAAGHDSPRKRPRKRSGARPMRINND) are disordered. Basic residues predominate over residues 187 to 196 (PRKRPRKRSG).

It belongs to the Nudix hydrolase family. RppH subfamily. It depends on a divalent metal cation as a cofactor.

Its function is as follows. Accelerates the degradation of transcripts by removing pyrophosphate from the 5'-end of triphosphorylated RNA, leading to a more labile monophosphorylated state that can stimulate subsequent ribonuclease cleavage. This Xanthomonas oryzae pv. oryzae (strain MAFF 311018) protein is RNA pyrophosphohydrolase.